The primary structure comprises 575 residues: Amyloid-beta A4 precursor protein-binding family A member 3 (575 aa).

M1 is modified (N-acetylmethionine). Residues 1 to 10 (MDFPTISRSP) show a composition bias toward polar residues. Disordered regions lie at residues 1–50 (MDFP…LSRM) and 118–211 (CEEC…GPCD). Residue S11 is modified to Phosphoserine. Positions 143–153 (EDPDEDSDSPE) are enriched in acidic residues. Over residues 156–184 (EGASAEQEGSRSSSSSPEPWLETVPLVTP) the composition is skewed to low complexity. S171 carries the post-translational modification Phosphoserine. The segment at 215–364 (LLDGVIFGAR…QFLRESGIDP (150 aa)) is required for interaction with NECAB3. The region spanning 217–381 (DGVIFGARYL…SPGACHLHNG (165 aa)) is the PID domain. A Phosphoserine modification is found at S372. 2 consecutive PDZ domains span residues 394-480 (EVHL…IVHC) and 485-560 (TAII…TMPA).

Binds to the cytoplasmic domain of amyloid protein (APP) in vivo. Interacts with HIF1AN (via N-terminus). Interacts with NECAB3; seems to mediate the interaction between NECAB3 and HIF1AN. As to expression, expressed in all tissues examined with lower levels in brain and testis.

The protein localises to the cytoplasm. The protein resides in the perinuclear region. Its function is as follows. May modulate processing of the amyloid-beta precursor protein (APP) and hence formation of APP-beta. May enhance the activity of HIF1A in macrophages by inhibiting the activity of HIF1AN. The protein is Amyloid-beta A4 precursor protein-binding family A member 3 (APBA3) of Homo sapiens (Human).